Consider the following 414-residue polypeptide: Esterase FrsA (414 aa).

It belongs to the FrsA family.

The catalysed reaction is a carboxylic ester + H2O = an alcohol + a carboxylate + H(+). In terms of biological role, catalyzes the hydrolysis of esters. This Escherichia coli O45:K1 (strain S88 / ExPEC) protein is Esterase FrsA.